A 269-amino-acid polypeptide reads, in one-letter code: Mitochondrial distribution and morphology protein 12 (269 aa).

Residues 1-269 form the SMP-LTD domain; sequence MSLEVNWEQI…WPNWIEFQGV (269 aa). Residues 72–119 form a disordered region; it reads ERAGTGEGDEDDGRVAPTSTPMKHQTSGSSDQTDASNPISPSTSHDHE. Positions 88–114 are enriched in polar residues; the sequence is PTSTPMKHQTSGSSDQTDASNPISPST.

This sequence belongs to the MDM12 family. As to quaternary structure, component of the ER-mitochondria encounter structure (ERMES) or MDM complex, composed of MMM1, MDM10, MDM12 and MDM34. An MMM1 homodimer associates with one molecule of MDM12 on each side in a pairwise head-to-tail manner, and the SMP-LTD domains of MMM1 and MDM12 generate a continuous hydrophobic tunnel for phospholipid trafficking.

Its subcellular location is the mitochondrion outer membrane. The protein localises to the endoplasmic reticulum membrane. In terms of biological role, component of the ERMES/MDM complex, which serves as a molecular tether to connect the endoplasmic reticulum (ER) and mitochondria. Components of this complex are involved in the control of mitochondrial shape and protein biogenesis, and function in nonvesicular lipid trafficking between the ER and mitochondria. MDM12 is required for the interaction of the ER-resident membrane protein MMM1 and the outer mitochondrial membrane-resident beta-barrel protein MDM10. The MDM12-MMM1 subcomplex functions in the major beta-barrel assembly pathway that is responsible for biogenesis of all mitochondrial outer membrane beta-barrel proteins, and acts in a late step after the SAM complex. The MDM10-MDM12-MMM1 subcomplex further acts in the TOM40-specific pathway after the action of the MDM12-MMM1 complex. Essential for establishing and maintaining the structure of mitochondria and maintenance of mtDNA nucleoids. This Komagataella phaffii (strain GS115 / ATCC 20864) (Yeast) protein is Mitochondrial distribution and morphology protein 12.